A 629-amino-acid chain; its full sequence is Dapper homolog 3 (629 aa).

A Phosphoserine modification is found at S6. Disordered regions lie at residues 50–76 (PGMG…RRAA) and 105–574 (GGLE…GGLV). Residues 56-69 (EAEDEEDADEDEDA) are compositionally biased toward acidic residues. Positions 63–87 (ADEDEDAAAARRAAAALEEQLEALP) form a coiled coil. Positions 105-150 (GGLEQESGRSSGFYEDPSSTGGPDSPPSTFCGDSGFSGSSSYGRLG) are enriched in low complexity. 2 positions are modified to phosphoserine: S165 and S239. At R258 the chain carries Omega-N-methylarginine. The span at 301–311 (PAREPSLERVG) shows a compositional bias: basic and acidic residues. The span at 316-335 (SPAALSRAWASSWESEAAPE) shows a compositional bias: low complexity. Positions 336 to 348 (PAAPPAAPSPPDS) are enriched in pro residues. Phosphoserine occurs at positions 426 and 478. The span at 525 to 535 (SAGRLGPLGRR) shows a compositional bias: low complexity. The segment covering 536 to 546 (GPAGGVGGGYG) has biased composition (gly residues). A compositionally biased stretch (low complexity) spans 547 to 568 (ESESSASEGESPAFSSASSDSD). Positions 626-629 (MTTV) match the PDZ-binding motif.

The protein belongs to the dapper family. In terms of assembly, can form homodimers and heterodimers with DACT1 or DACT3. Interacts with CSNK1D, PKA catalytic subunit, PKC-type kinase, DVL1, DVL3, VANGL1, VANGL2 and CTNND1. Interacts with DVL2.

Its function is as follows. May be involved in regulation of intracellular signaling pathways during development. Specifically thought to play a role in canonical and/or non-canonical Wnt signaling pathways through interaction with DSH (Dishevelled) family proteins. The protein is Dapper homolog 3 (DACT3) of Homo sapiens (Human).